Here is a 167-residue protein sequence, read N- to C-terminus: Small ribosomal subunit protein uS5 (167 aa).

One can recognise an S5 DRBM domain in the interval 12 to 75 (LEDQVVSINR…DAAKKSLIEV (64 aa)).

The protein belongs to the universal ribosomal protein uS5 family. In terms of assembly, part of the 30S ribosomal subunit. Contacts proteins S4 and S8.

Its function is as follows. With S4 and S12 plays an important role in translational accuracy. Located at the back of the 30S subunit body where it stabilizes the conformation of the head with respect to the body. This is Small ribosomal subunit protein uS5 from Lacticaseibacillus paracasei (strain ATCC 334 / BCRC 17002 / CCUG 31169 / CIP 107868 / KCTC 3260 / NRRL B-441) (Lactobacillus paracasei).